A 108-amino-acid chain; its full sequence is Glutaredoxin 4 (108 aa).

Residues 5 to 107 (IKKIQNQIQN…KTISICDKLN (103 aa)) form the Glutaredoxin domain. K22 provides a ligand contact to glutathione. Residue C30 coordinates [2Fe-2S] cluster. Glutathione is bound by residues R59, F71, and 84-85 (CN).

The protein belongs to the glutaredoxin family. Monothiol subfamily. In terms of assembly, homodimer.

It is found in the cytoplasm. Monothiol glutaredoxin involved in the biogenesis of iron-sulfur clusters. This Buchnera aphidicola subsp. Baizongia pistaciae (strain Bp) protein is Glutaredoxin 4 (grxD).